Here is a 119-residue protein sequence, read N- to C-terminus: Large ribosomal subunit protein bL20 (119 aa).

This sequence belongs to the bacterial ribosomal protein bL20 family.

Binds directly to 23S ribosomal RNA and is necessary for the in vitro assembly process of the 50S ribosomal subunit. It is not involved in the protein synthesizing functions of that subunit. This chain is Large ribosomal subunit protein bL20, found in Xanthomonas campestris pv. campestris (strain 8004).